Here is a 166-residue protein sequence, read N- to C-terminus: Bile acid 7alpha-dehydratase (166 aa).

As to quaternary structure, homodimer.

The enzyme catalyses 7alpha,12alpha-dihydroxy-3-oxochol-4-en-24-oyl-CoA = 12alpha-hydroxy-3-oxochola-4,6-dien-24-oyl-CoA + H2O. It carries out the reaction 7alpha-hydroxy-3-oxochol-4-en-24-oyl-CoA = 3-oxochol-4,6-dien-24-oyl-CoA + H2O. It catalyses the reaction 7alpha,12alpha-dihydroxy-3-oxochol-4-en-24-oate = 12alpha-hydroxy-3-oxochola-4,6-dien-24-oate + H2O. The catalysed reaction is 7alpha-hydroxy-3-oxochol-4-en-24-oate = 3-oxochola-4,6-dien-24-oate + H2O. Its pathway is lipid metabolism; bile acid biosynthesis. Functionally, functions in the bile acid 7alpha-dehydroxylation pathway, which forms secondary bile acids via the 7alpha-dehydroxylation of primary bile acids, and is carried out by intestinal anaerobic bacteria. Catalyzes the dehydration step in this pathway, yielding a 3-oxo-Delta(4,6)-bile acid-CoA intermediate. In vitro, can act on the free bile acids (non CoA-conjugated) 7-alpha,12-alpha-dihydroxy-3-oxochol-4-enoate and 7-alpha-hydroxy-3-oxochol-4-enoate, but not on 7-alpha,12-alpha-dihydroxy-3-oxo-5-beta-cholanate, 3-alpha,7-alpha,12-alpha-trihydroxy-5-beta-cholanate or 7-beta-hydroxy-3-oxochol-4-enoate. The sequence is that of Bile acid 7alpha-dehydratase from Clostridium scindens (strain JCM 10418 / VPI 12708).